Consider the following 342-residue polypeptide: [Citrate [pro-3S]-lyase] ligase (342 aa).

The 127-residue stretch at 1 to 127 (MTLILKRVQL…RAVLMENSRE (127 aa)) folds into the N-acetyltransferase domain.

The catalysed reaction is holo-[citrate lyase ACP] + acetate + ATP = acetyl-[citrate lyase ACP] + AMP + diphosphate. Acetylation of prosthetic group (2-(5''-phosphoribosyl)-3'-dephosphocoenzyme-A) of the gamma subunit of citrate lyase. The polypeptide is [Citrate [pro-3S]-lyase] ligase (citC) (Klebsiella pneumoniae).